Consider the following 412-residue polypeptide: Putative competence-damage inducible protein (412 aa).

It belongs to the CinA family.

The protein is Putative competence-damage inducible protein of Bacillus cereus (strain ATCC 14579 / DSM 31 / CCUG 7414 / JCM 2152 / NBRC 15305 / NCIMB 9373 / NCTC 2599 / NRRL B-3711).